The primary structure comprises 2104 residues: Phenolphthiocerol synthesis polyketide synthase type I Pks15/1 (2104 aa).

One can recognise a Ketosynthase family 3 (KS3) domain in the interval 41–464 (TEPVAVVGIG…GTNAHVILEE (424 aa)). Active-site for beta-ketoacyl synthase activity residues include Cys-211, His-346, and His-386. Positions 571–887 (TAVVFPGQGS…GQLFSTGMSV (317 aa)) are acyltransferase. Ser-662 serves as the catalytic For acyltransferase activity. The tract at residues 935-1057 (HALLGAVVER…GMLGVEAASS (123 aa)) is N-terminal hotdog fold. A dehydratase region spans residues 935–1095 (HALLGAVVER…YAYGPGFQGL (161 aa)). The PKS/mFAS DH domain maps to 935-1207 (HALLGAVVER…TRAMSAAQLR (273 aa)). Catalysis depends on His-967, which acts as the Proton acceptor; for dehydratase activity. The segment at 1069 to 1207 (AESVDISDGY…TRAMSAAQLR (139 aa)) is C-terminal hotdog fold. Residue Asp-1128 is the Proton donor; for dehydratase activity of the active site. Residues 1400–1705 (GTLEDLVIEP…QARHIGKVVL (306 aa)) are enoylreductase. Residues 1530–1547 (VLIHAGTGGVGMAAVQLA) and 1719–1734 (TVLITGATGAVGAVLA) contribute to the NADP(+) site. Residues 1718–1899 (ATVLITGATG…SVAWGLWEQS (182 aa)) form a beta-ketoacyl reductase (KR) region. The 76-residue stretch at 2004–2079 (DALVGLVCLQ…AIAEYVGRQI (76 aa)) folds into the Carrier domain. The residue at position 2039 (Ser-2039) is an O-(pantetheine 4'-phosphoryl)serine. Residues 2081-2104 (DSQATQAEEEKLPESDGEMVSVTA) are disordered.

The protein belongs to the thiolase-like superfamily. Beta-ketoacyl-ACP synthases family. Pantetheine 4'-phosphate serves as cofactor.

The enzyme catalyses a fatty acyl-[ACP] + malonyl-[ACP] + H(+) = a 3-oxoacyl-[ACP] + holo-[ACP] + CO2. It functions in the pathway lipid metabolism; fatty acid biosynthesis. Its function is as follows. Catalyzes the elongation by iterative transfer of p-hydroxybenzoyl group from FadD22 (pHBA-S-FAdD22) to form p-hydroxyphenylalkanoate (pHPA) intermediates during phenolphthiocerol (PPOL) biosynthesis. PPOL is an important intermediate in the biosynthesis of phenolic glycolipid (mycosid B). The chain is Phenolphthiocerol synthesis polyketide synthase type I Pks15/1 (pks15/1) from Mycobacterium marinum (strain ATCC BAA-535 / M).